The following is a 360-amino-acid chain: Photosystem II protein D1 (360 aa).

A run of 3 helical transmembrane segments spans residues tyrosine 29–threonine 46, histidine 118–phenylalanine 133, and tryptophan 142–alanine 156. Histidine 118 contributes to the chlorophyll a binding site. Tryptophan 126 lines the pheophytin a pocket. Residues aspartate 170 and glutamate 189 each contribute to the [CaMn4O5] cluster site. The helical transmembrane segment at phenylalanine 197–leucine 218 threads the bilayer. Histidine 198 is a chlorophyll a binding site. Residues histidine 215 and serine 264–phenylalanine 265 contribute to the a quinone site. Fe cation is bound at residue histidine 215. Histidine 272 provides a ligand contact to Fe cation. The chain crosses the membrane as a helical span at residues phenylalanine 274–leucine 288. Histidine 332, glutamate 333, aspartate 342, and alanine 344 together coordinate [CaMn4O5] cluster. The propeptide occupies alanine 345–glycine 360.

Belongs to the reaction center PufL/M/PsbA/D family. PSII is composed of 1 copy each of membrane proteins PsbA, PsbB, PsbC, PsbD, PsbE, PsbF, PsbH, PsbI, PsbJ, PsbK, PsbL, PsbM, PsbT, PsbX, PsbY, PsbZ, Psb30/Ycf12, at least 3 peripheral proteins of the oxygen-evolving complex and a large number of cofactors. It forms dimeric complexes. The D1/D2 heterodimer binds P680, chlorophylls that are the primary electron donor of PSII, and subsequent electron acceptors. It shares a non-heme iron and each subunit binds pheophytin, quinone, additional chlorophylls, carotenoids and lipids. D1 provides most of the ligands for the Mn4-Ca-O5 cluster of the oxygen-evolving complex (OEC). There is also a Cl(-1) ion associated with D1 and D2, which is required for oxygen evolution. The PSII complex binds additional chlorophylls, carotenoids and specific lipids. serves as cofactor. In terms of processing, tyr-161 forms a radical intermediate that is referred to as redox-active TyrZ, YZ or Y-Z. C-terminally processed by CTPA; processing is essential to allow assembly of the oxygen-evolving complex and thus photosynthetic growth.

It is found in the plastid. It localises to the chloroplast thylakoid membrane. The catalysed reaction is 2 a plastoquinone + 4 hnu + 2 H2O = 2 a plastoquinol + O2. Photosystem II (PSII) is a light-driven water:plastoquinone oxidoreductase that uses light energy to abstract electrons from H(2)O, generating O(2) and a proton gradient subsequently used for ATP formation. It consists of a core antenna complex that captures photons, and an electron transfer chain that converts photonic excitation into a charge separation. The D1/D2 (PsbA/PsbD) reaction center heterodimer binds P680, the primary electron donor of PSII as well as several subsequent electron acceptors. This chain is Photosystem II protein D1, found in Rhodomonas salina (Cryptomonas salina).